The following is a 90-amino-acid chain: Aminoacyl carrier protein 1 (90 aa).

The region spanning 6–84 is the Carrier domain; the sequence is TDVRNRIIKL…TLERMVMTQL (79 aa). S42 bears the O-(pantetheine 4'-phosphoryl)serine mark.

4'-phosphopantetheine is transferred from CoA to a specific serine of the apo-form of this carrier protein.

Its function is as follows. Aminoacyl carrier protein. Can be charged with L-glycine via the formation of a thioester bond between the amino acid and the 4'-phosphopantetheinyl prosthetic group, catalyzed by the bll0957 ligase. In Bradyrhizobium diazoefficiens (strain JCM 10833 / BCRC 13528 / IAM 13628 / NBRC 14792 / USDA 110), this protein is Aminoacyl carrier protein 1.